A 623-amino-acid polypeptide reads, in one-letter code: Zinc finger protein 131 (623 aa).

One can recognise a BTB domain in the interval 34 to 98 (TDITLIVDGH…TYTAKLMIQG (65 aa)). The short motif at 137 to 148 (TGKNEAKKRKIA) is the Nuclear localization signal 1 element. 3 C2H2-type zinc fingers span residues 261–283 (FHCE…MKSH), 288–311 (FKCE…NCYH), and 328–350 (HVCQ…LRKH). Residues Lys-289 and Lys-295 each participate in a glycyl lysine isopeptide (Lys-Gly) (interchain with G-Cter in SUMO2) cross-link. A Nuclear localization signal 2 motif is present at residues 317 to 328 (VSKKQRTGKKIH). A C2H2-type 4; degenerate zinc finger spans residues 356-381 (FECPNCHERFARNSTLKCHLTACQTG). 2 C2H2-type zinc fingers span residues 392 to 414 (YECQ…LVIH) and 420 to 443 (NHCT…SDAH). Positions 573–617 (NQEERESSQADAAEAAREDHEDAEDLETKPTVDSEAEKAENEDRT) are enriched in basic and acidic residues. The disordered stretch occupies residues 573–623 (NQEERESSQADAAEAAREDHEDAEDLETKPTVDSEAEKAENEDRTALPVLE). Lys-601 is covalently cross-linked (Glycyl lysine isopeptide (Lys-Gly) (interchain with G-Cter in SUMO)).

It belongs to the krueppel C2H2-type zinc-finger protein family. Post-translationally, monosumoylated at Lys-601 by CBX4 and UHRF2. Sumoylation may potentiate ZNF131 inhibition of estrogen signaling. Sumoylation does not interfere with ubiquitination. In terms of processing, ubiquitinated. Predominant expression is found in different brain areas such as the occipital and temporal lobe, the nucleus caudatus, hippocampus, and the cerebellum as well as in testis and thymus.

It localises to the nucleus. Functionally, plays a role during development and organogenesis as well as in the function of the adult central nervous system. May be involved in transcriptional regulation as a repressor of ESR1/ER-alpha signaling. This is Zinc finger protein 131 (ZNF131) from Homo sapiens (Human).